A 96-amino-acid polypeptide reads, in one-letter code: Aspartyl/glutamyl-tRNA(Asn/Gln) amidotransferase subunit C (96 aa).

This sequence belongs to the GatC family. As to quaternary structure, heterotrimer of A, B and C subunits.

The catalysed reaction is L-glutamyl-tRNA(Gln) + L-glutamine + ATP + H2O = L-glutaminyl-tRNA(Gln) + L-glutamate + ADP + phosphate + H(+). The enzyme catalyses L-aspartyl-tRNA(Asn) + L-glutamine + ATP + H2O = L-asparaginyl-tRNA(Asn) + L-glutamate + ADP + phosphate + 2 H(+). Functionally, allows the formation of correctly charged Asn-tRNA(Asn) or Gln-tRNA(Gln) through the transamidation of misacylated Asp-tRNA(Asn) or Glu-tRNA(Gln) in organisms which lack either or both of asparaginyl-tRNA or glutaminyl-tRNA synthetases. The reaction takes place in the presence of glutamine and ATP through an activated phospho-Asp-tRNA(Asn) or phospho-Glu-tRNA(Gln). This chain is Aspartyl/glutamyl-tRNA(Asn/Gln) amidotransferase subunit C, found in Herpetosiphon aurantiacus (strain ATCC 23779 / DSM 785 / 114-95).